A 317-amino-acid chain; its full sequence is L-lactate dehydrogenase (317 aa).

3 residues coordinate NAD(+): valine 16, aspartate 37, and tyrosine 69. Substrate contacts are provided by residues glutamine 86, arginine 92, and 124-127 (NPVD). Residues 122-124 (ASN) and serine 147 each bind NAD(+). 152–155 (DSAR) provides a ligand contact to substrate. Histidine 179 (proton acceptor) is an active-site residue. The residue at position 223 (tyrosine 223) is a Phosphotyrosine. Threonine 232 is a binding site for substrate.

The protein belongs to the LDH/MDH superfamily. LDH family. As to quaternary structure, homotetramer.

It localises to the cytoplasm. The catalysed reaction is (S)-lactate + NAD(+) = pyruvate + NADH + H(+). It participates in fermentation; pyruvate fermentation to lactate; (S)-lactate from pyruvate: step 1/1. In terms of biological role, catalyzes the conversion of lactate to pyruvate. This chain is L-lactate dehydrogenase, found in Mycoplasma capricolum subsp. capricolum (strain California kid / ATCC 27343 / NCTC 10154).